The primary structure comprises 570 residues: Dihydroxy-acid dehydratase (570 aa).

The segment at 1 to 25 is disordered; that stretch reads MSQQDSPANADHRRRHSSIVVDGPG. Cys-60 contacts [2Fe-2S] cluster. Asp-92 is a Mg(2+) binding site. Position 133 (Cys-133) interacts with [2Fe-2S] cluster. Residues Asp-134 and Lys-135 each coordinate Mg(2+). Residue Lys-135 is modified to N6-carboxylysine. Cys-202 lines the [2Fe-2S] cluster pocket. Glu-453 contacts Mg(2+). Ser-479 functions as the Proton acceptor in the catalytic mechanism.

This sequence belongs to the IlvD/Edd family. As to quaternary structure, homodimer. [2Fe-2S] cluster is required as a cofactor. It depends on Mg(2+) as a cofactor.

It carries out the reaction (2R)-2,3-dihydroxy-3-methylbutanoate = 3-methyl-2-oxobutanoate + H2O. It catalyses the reaction (2R,3R)-2,3-dihydroxy-3-methylpentanoate = (S)-3-methyl-2-oxopentanoate + H2O. The protein operates within amino-acid biosynthesis; L-isoleucine biosynthesis; L-isoleucine from 2-oxobutanoate: step 3/4. It functions in the pathway amino-acid biosynthesis; L-valine biosynthesis; L-valine from pyruvate: step 3/4. Functionally, functions in the biosynthesis of branched-chain amino acids. Catalyzes the dehydration of (2R,3R)-2,3-dihydroxy-3-methylpentanoate (2,3-dihydroxy-3-methylvalerate) into 2-oxo-3-methylpentanoate (2-oxo-3-methylvalerate) and of (2R)-2,3-dihydroxy-3-methylbutanoate (2,3-dihydroxyisovalerate) into 2-oxo-3-methylbutanoate (2-oxoisovalerate), the penultimate precursor to L-isoleucine and L-valine, respectively. This is Dihydroxy-acid dehydratase from Chromohalobacter salexigens (strain ATCC BAA-138 / DSM 3043 / CIP 106854 / NCIMB 13768 / 1H11).